The following is a 339-amino-acid chain: MKLAIVAGDGIGPEVVAQAVKILDVVQPGVEKTNYDLGARRFHATGEILPDSVIAELREHDAILLGAIGDPSVPSGVLERGLLLRLRFELDYHINLRPGRLYPGVKSPLALEPGNPEIDFVVVREGTEGPYTGNGGAIRVGTANEVATEVSVNTAFGVRRVVRDAFERAMRRRKHLTLVHKNNVLTFAGSLWWRTVQEIGEEYPDVELAYQHVDAATIHMVTDPGRFDVIVTDNLFGDIITDLAAAVCGGIGLAASGNIDATRTNPSMFEPVHGSAPDIAGQGIADPTAAIMSVSLLLAHLGLDDTASRVDRAVEGYLATRGNERLATAAVGERIAAAL.

Positions 87, 97, 124, and 214 each coordinate substrate. Mg(2+)-binding residues include D214, D238, and D242. 274 to 286 is an NAD(+) binding site; sequence GSAPDIAGQGIAD.

It belongs to the isocitrate and isopropylmalate dehydrogenases family. LeuB type 2 subfamily. As to quaternary structure, homodimer. It depends on Mg(2+) as a cofactor. Mn(2+) is required as a cofactor.

The protein localises to the cytoplasm. It carries out the reaction (2R,3S)-3-isopropylmalate + NAD(+) = 4-methyl-2-oxopentanoate + CO2 + NADH. It functions in the pathway amino-acid biosynthesis; L-leucine biosynthesis; L-leucine from 3-methyl-2-oxobutanoate: step 3/4. Functionally, catalyzes the oxidation of 3-carboxy-2-hydroxy-4-methylpentanoate (3-isopropylmalate) to 3-carboxy-4-methyl-2-oxopentanoate. The product decarboxylates to 4-methyl-2 oxopentanoate. The protein is 3-isopropylmalate dehydrogenase of Mycobacterium ulcerans (strain Agy99).